Reading from the N-terminus, the 275-residue chain is Glucan endo-1,3-beta-glucosidase, acidic isoform PR-N (275 aa).

The Nucleophile role is filled by glutamate 196.

It belongs to the glycosyl hydrolase 17 family. The N-terminus is blocked.

Its subcellular location is the secreted. It localises to the extracellular space. The catalysed reaction is Hydrolysis of (1-&gt;3)-beta-D-glucosidic linkages in (1-&gt;3)-beta-D-glucans.. Functionally, implicated in the defense of plants against pathogens. The polypeptide is Glucan endo-1,3-beta-glucosidase, acidic isoform PR-N (PRN) (Nicotiana tabacum (Common tobacco)).